We begin with the raw amino-acid sequence, 476 residues long: Monodehydroascorbate reductase 2, peroxisomal (476 aa).

Topologically, residues 1–3 (MGR) are cytoplasmic. A helical transmembrane segment spans residues 4–24 (AFVHVILGGGVAAGYAALEFA). Residues 12–15 (GGVA), E40, R47, K52, and 146–147 (RN) contribute to the FAD site. Over 25 to 447 (RRGGYSRGEL…GGLALGEKPT (423 aa)) the chain is Peroxisomal. NAD(+) is bound by residues 171 to 177 (GGYIGME), E195, R201, and G260. 173–177 (YIGME) is an NADP(+) binding site. 2 residues coordinate NADP(+): R201 and G260. D297 is an FAD binding site. Residue 314 to 315 (EH) participates in NAD(+) binding. 314–315 (EH) is a binding site for NADP(+). Position 316 (V316) interacts with FAD. Residue R320 participates in L-ascorbate binding. Y346 serves as a coordination point for FAD. Residue Y346 coordinates NAD(+). Position 346 (Y346) interacts with NADP(+). R348 contributes to the L-ascorbate binding site. A helical transmembrane segment spans residues 448–468 (YVWHATAGVIAAASIAAFGYW). The Cytoplasmic portion of the chain corresponds to 469 to 476 (YGRKRRRW).

The protein belongs to the FAD-dependent oxidoreductase family. Requires FAD as cofactor.

It is found in the peroxisome membrane. It catalyses the reaction 2 monodehydro-L-ascorbate radical + NADH + H(+) = 2 L-ascorbate + NAD(+). Catalyzes the conversion of monodehydroascorbate to ascorbate, oxidizing NADH in the process. Ascorbate is a major antioxidant against reactive oxygen species (ROS) and nitric oxide (NO). The sequence is that of Monodehydroascorbate reductase 2, peroxisomal from Oryza sativa subsp. japonica (Rice).